A 505-amino-acid chain; its full sequence is Lysine--tRNA ligase (505 aa).

2 residues coordinate Mg(2+): Glu415 and Glu422.

Belongs to the class-II aminoacyl-tRNA synthetase family. Homodimer. The cofactor is Mg(2+).

It localises to the cytoplasm. The enzyme catalyses tRNA(Lys) + L-lysine + ATP = L-lysyl-tRNA(Lys) + AMP + diphosphate. The sequence is that of Lysine--tRNA ligase from Xanthomonas axonopodis pv. citri (strain 306).